The following is a 734-amino-acid chain: MDTPISASNQTATVVKPQQPRRVLACVLCQQRKIKCDRTFPCTNCVRAHVQCEQATRQRRRRFPEKELLTRLRLYESLLQQHNIKFDPLHTPTADHRSASDDGRDDLPEGAESEGTFGEREKPAVKTKSLYEFGSCINSLISGRLILVNRGDDDGNNGEDDEHDTGFLHDTDDVRPAVIQKAWNHTFQGQNNDHLLFGSPVGTVNLSASHPSHVHIFRLWQVYLDNVNPLLKVTHTPTLQTRIIDAASDITNISPTLEALMFSIYCVSLLSLSDEQCRALFGSAKKELSTGYQFACQQALRSCSILRSSDRESLTALYLYLVSIRPDTDPASLSSLLSVAIRIAQRIGIHNESTYGKCSALETEMRHRLWWSLIIFDNRICEMSDDKTASLAPTWDCKVPLNVNDFELQPEMKTPPAPNNRPTEMLFAVVRSELADFVRHSAFHLNFTNPSLNTIATRLTDETAQLVSLERALEEKYLAFCNPENALHFMTLWTMRGSLAKSRLLQHYSQCSNTSVPPTDAQRNTGIAHALRMLECDTELMTSPLTQGYRWLVHFHFPFPAYIHLLQDLKKRPVEAHADRAWEAMSDNYAVRMMDASQDDRPFFIVFSRIVLQAWEAREKMAVAAQLETPPPVPPRMVVDIRDKVMQMTASFGMDAAAAVESGGVVGVKAGDLDMPMQMDFAAPEMAYGAGGHGATGLEPWGCLDMAGPAAGDVGANQFLLNTMEWNALHARDR.

The segment at residues 26–52 (CVLCQQRKIKCDRTFPCTNCVRAHVQC) is a DNA-binding region (zn(2)-C6 fungal-type). Over residues 86 to 107 (FDPLHTPTADHRSASDDGRDDL) the composition is skewed to basic and acidic residues. Residues 86–122 (FDPLHTPTADHRSASDDGRDDLPEGAESEGTFGEREK) are disordered.

The protein localises to the nucleus. Functionally, transcriptional regulator; part of the gene cluster that mediates the biosynthesis of the tetrahydroxanthone dimer secalonic acid D. In Aspergillus aculeatus (strain ATCC 16872 / CBS 172.66 / WB 5094), this protein is Transcriptional regulator AacuB.